The chain runs to 258 residues: Acyl-[acyl-carrier-protein]--UDP-N-acetylglucosamine O-acyltransferase (258 aa).

This sequence belongs to the transferase hexapeptide repeat family. LpxA subfamily. In terms of assembly, homotrimer.

The protein resides in the cytoplasm. The enzyme catalyses a (3R)-hydroxyacyl-[ACP] + UDP-N-acetyl-alpha-D-glucosamine = a UDP-3-O-[(3R)-3-hydroxyacyl]-N-acetyl-alpha-D-glucosamine + holo-[ACP]. Its pathway is glycolipid biosynthesis; lipid IV(A) biosynthesis; lipid IV(A) from (3R)-3-hydroxytetradecanoyl-[acyl-carrier-protein] and UDP-N-acetyl-alpha-D-glucosamine: step 1/6. Its function is as follows. Involved in the biosynthesis of lipid A, a phosphorylated glycolipid that anchors the lipopolysaccharide to the outer membrane of the cell. The sequence is that of Acyl-[acyl-carrier-protein]--UDP-N-acetylglucosamine O-acyltransferase from Pseudomonas putida (strain ATCC 47054 / DSM 6125 / CFBP 8728 / NCIMB 11950 / KT2440).